The chain runs to 318 residues: Oxygen-evolving enhancer protein 1, chloroplastic (318 aa).

A signal peptide spans 1–18; the sequence is MKAVIAVFITLMLTAVVA. A helical transmembrane segment spans residues 45 to 65; the sequence is AAAAALAALTTLSVISPSFAI.

This sequence belongs to the PsbO family.

Its subcellular location is the plastid. It localises to the chloroplast thylakoid membrane. Its function is as follows. Stabilizes the manganese cluster which is the primary site of water splitting. The chain is Oxygen-evolving enhancer protein 1, chloroplastic from Chattonella marina var. antiqua (Red tide flagellate).